Here is a 154-residue protein sequence, read N- to C-terminus: 6,7-dimethyl-8-ribityllumazine synthase (154 aa).

5-amino-6-(D-ribitylamino)uracil contacts are provided by residues Trp22, 56–58 (AWE), and 80–82 (CVI). 85–86 (DT) provides a ligand contact to (2S)-2-hydroxy-3-oxobutyl phosphate. His88 serves as the catalytic Proton donor. Asn113 lines the 5-amino-6-(D-ribitylamino)uracil pocket. Position 127 (Arg127) interacts with (2S)-2-hydroxy-3-oxobutyl phosphate.

The protein belongs to the DMRL synthase family. Forms an icosahedral capsid composed of 60 subunits, arranged as a dodecamer of pentamers.

It carries out the reaction (2S)-2-hydroxy-3-oxobutyl phosphate + 5-amino-6-(D-ribitylamino)uracil = 6,7-dimethyl-8-(1-D-ribityl)lumazine + phosphate + 2 H2O + H(+). It functions in the pathway cofactor biosynthesis; riboflavin biosynthesis; riboflavin from 2-hydroxy-3-oxobutyl phosphate and 5-amino-6-(D-ribitylamino)uracil: step 1/2. Its function is as follows. Catalyzes the formation of 6,7-dimethyl-8-ribityllumazine by condensation of 5-amino-6-(D-ribitylamino)uracil with 3,4-dihydroxy-2-butanone 4-phosphate. This is the penultimate step in the biosynthesis of riboflavin. This Xanthomonas axonopodis pv. citri (strain 306) protein is 6,7-dimethyl-8-ribityllumazine synthase.